The following is a 103-amino-acid chain: Cyclotide vibi-I (103 aa).

Positions 1-9 (AAFALPAFA) are cleaved as a signal peptide. A propeptide spanning residues 10–69 (SFEKDVITPAALEAVLNRKAPLSNIMMENDAILNVIANVKTVISNPVLEEALLKTNHGVN) is cleaved from the precursor. The segment at residues 70-99 (GIPCGESCVWIPCLTSTVGCSCKSKVCYRN) is a cross-link (cyclopeptide (Gly-Asn)). 3 cysteine pairs are disulfide-bonded: cysteine 73–cysteine 89, cysteine 77–cysteine 91, and cysteine 82–cysteine 96. A propeptide spanning residues 100 to 103 (SLDN) is cleaved from the precursor.

This is a cyclic peptide.

Probably participates in a plant defense mechanism. This chain is Cyclotide vibi-I, found in Viola biflora (Yellow wood violet).